The primary structure comprises 209 residues: MGKLYVFDHPLIQHKITYIRDKNTGTKDFRELVDEVASLMAFEITRDLPLEDIEIETPVSKATTKVIAGKKLGLIPILRAGLGMVDGILKLIPAAKVGHVGLYRDPKTLQPVEYYVKLPTDVEERDFIVLDPMLATGGSAAEAINSLKKRGAKQIKLMCIVAAPEGVKVVQEEHPDVDIYVAALDEKLNDHGYVVPGLGDAGDRLFGTK.

5-phospho-alpha-D-ribose 1-diphosphate is bound by residues R79, R104, and 131-139 (DPMLATGGS). Residues V194 and 199-201 (GDA) each bind uracil. D200 contributes to the 5-phospho-alpha-D-ribose 1-diphosphate binding site.

The protein belongs to the UPRTase family. It depends on Mg(2+) as a cofactor.

The enzyme catalyses UMP + diphosphate = 5-phospho-alpha-D-ribose 1-diphosphate + uracil. It functions in the pathway pyrimidine metabolism; UMP biosynthesis via salvage pathway; UMP from uracil: step 1/1. Allosterically activated by GTP. In terms of biological role, catalyzes the conversion of uracil and 5-phospho-alpha-D-ribose 1-diphosphate (PRPP) to UMP and diphosphate. The protein is Uracil phosphoribosyltransferase of Bacillus mycoides (strain KBAB4) (Bacillus weihenstephanensis).